A 2240-amino-acid polypeptide reads, in one-letter code: Nonribisomal peptide synthetase notE (2240 aa).

Positions 22–52 (TETMRETLSSSSSPLSLSSITSPLSSASEPP) are disordered. Low complexity predominate over residues 28–52 (TLSSSSSPLSLSSITSPLSSASEPP). An adenylation 1 region spans residues 85–484 (QQRCREAPES…GRKEGQVKIR (400 aa)). Residues 616-692 (PPTTATEHAL…EQARKATPVS (77 aa)) enclose the Carrier 1 domain. The residue at position 653 (S653) is an O-(pantetheine 4'-phosphoryl)serine. Positions 732-1144 (EDIFPCTPLQ…DFASPQDRDL (413 aa)) are condensation 1. An adenylation 2 region spans residues 1167 to 1564 (QEARQPSREA…GRRDTQLKLR (398 aa)). The Carrier 2 domain maps to 1700–1776 (PVSRGPELRL…ELARCTGEEP (77 aa)). Position 1737 is an O-(pantetheine 4'-phosphoryl)serine (S1737). Positions 1845 to 2159 (FSFHGEVSVE…ILQHQNIDMD (315 aa)) are condensation 2. Positions 2008 to 2027 (CTMPVKATPPTDSDDSRPSA) are disordered.

The protein belongs to the NRP synthetase family.

It carries out the reaction L-proline + L-tryptophan + 2 ATP = brevianamide F + 2 AMP + 2 diphosphate + 2 H(+). Its pathway is alkaloid biosynthesis. Functionally, nonribisomal peptide synthetase; part of the gene cluster that mediates the biosynthesis of notoamide, a fungal indole alkaloid that belongs to a family of natural products containing a characteristic bicyclo[2.2.2]diazaoctane core. The first step of notoamide biosynthesis involves coupling of L-proline and L-tryptophan by the bimodular NRPS notE, to produce cyclo-L-tryptophan-L-proline called brevianamide F. The reverse prenyltransferase notF then acts as a deoxybrevianamide E synthase and converts brevianamide F to deoxybrevianamide E via reverse prenylation at C-2 of the indole ring leading to the bicyclo[2.2.2]diazaoctane core. Deoxybrevianamide E is further hydroxylated at C-6 of the indole ring, likely catalyzed by the cytochrome P450 monooxygenase notG, to yield 6-hydroxy-deoxybrevianamide E. 6-hydroxy-deoxybrevianamide E is a specific substrate of the prenyltransferase notC for normal prenylation at C-7 to produce 6-hydroxy-7-prenyl-deoxybrevianamide, also called notoamide S. As the proposed pivotal branching point in notoamide biosynthesis, notoamide S can be diverted to notoamide E through an oxidative pyran ring closure putatively catalyzed by either notH cytochrome P450 monooxygenase or the notD FAD-linked oxidoreductase. This step would be followed by an indole 2,3-epoxidation-initiated pinacol-like rearrangement catalyzed by the notB FAD-dependent monooxygenase leading to the formation of notoamide C and notoamide D. On the other hand notoamide S is converted to notoamide T by notH (or notD), a bifunctional oxidase that also functions as the intramolecular Diels-Alderase responsible for generation of (+)-notoamide T. To generate antipodal (-)-notoaminide T, notH' (or notD') in Aspergillus versicolor is expected to catalyze a Diels-Alder reaction leading to the opposite stereochemistry. The remaining oxidoreductase notD (or notH) likely catalyzes the oxidative pyran ring formation to yield (+)-stephacidin A. The FAD-dependent monooxygenase notI is highly similar to notB and is predicted to catalyze a similar conversion from (+)-stephacidin A to (-)-notoamide B via the 2,3-epoxidation of (+)-stephacidin A followed by a pinacol-type rearrangement. Finally, it remains unclear which enzyme could be responsible for the final hydroxylation steps leading to notoamide A and sclerotiamide. In Aspergillus sp. (strain MF297-2), this protein is Nonribisomal peptide synthetase notE.